The following is a 178-amino-acid chain: Large ribosomal subunit protein uL6 (178 aa).

The protein belongs to the universal ribosomal protein uL6 family. Part of the 50S ribosomal subunit.

In terms of biological role, this protein binds to the 23S rRNA, and is important in its secondary structure. It is located near the subunit interface in the base of the L7/L12 stalk, and near the tRNA binding site of the peptidyltransferase center. In Francisella philomiragia subsp. philomiragia (strain ATCC 25017 / CCUG 19701 / FSC 153 / O#319-036), this protein is Large ribosomal subunit protein uL6.